We begin with the raw amino-acid sequence, 207 residues long: Outer-membrane lipoprotein LolB (207 aa).

Residues 1 to 21 (MPTNTVRCLRLLPLASVLLAA) form the signal peptide. The N-palmitoyl cysteine moiety is linked to residue C22. Residue C22 is the site of S-diacylglycerol cysteine attachment.

Belongs to the LolB family. In terms of assembly, monomer.

The protein resides in the cell outer membrane. Functionally, plays a critical role in the incorporation of lipoproteins in the outer membrane after they are released by the LolA protein. The chain is Outer-membrane lipoprotein LolB from Pectobacterium carotovorum subsp. carotovorum (strain PC1).